Consider the following 382-residue polypeptide: MSAYSRPVLLLLCGLLLFTISIAVLNTLVPLWLSHQQLPTWQVGMVSSSYFTGNLVGTLIAGRFIQQLGFNRSYHCSCILFALATCGLMLTVDFWSWLGWRFLAGIACALIWVIVESALLRSGTLTNRGQLLAAYMMVYYLGTVIGQLLLGIVSTQLLSVIPWVGALVITAMLPLLFAQFSHQSRHESPPIAVWPMLKRRSARLGINGCIISGVLLGSLYGLLPLYLSHKGMSDASVGGWMALLVSSGIIGQWPMGRMADRYGRLLVLRIQVFVVILGSVAILGNYAMAPALFILGCAGFTLYPVAMAWACEKASADELVAMNQALLMSYTLGSLAGPTMTSLLMQRYSDNLLFIMIAGVAFVYLMMLLRKPDHQQTPYAAV.

11 helical membrane passes run 8 to 28 (VLLL…LNTL), 41 to 61 (WQVG…TLIA), 73 to 93 (SYHC…LTVD), 94 to 114 (FWSW…IWVI), 133 to 153 (AAYM…LGIV), 157 to 177 (LLSV…PLLF), 208 to 228 (GCII…LYLS), 235 to 255 (ASVG…QWPM), 274 to 294 (VVIL…ALFI), 325 to 345 (ALLM…SLLM), and 349 to 369 (SDNL…MMLL).

It belongs to the major facilitator superfamily. YcaD (TC 2.A.1.26) family.

It localises to the cell inner membrane. This is an uncharacterized protein from Yersinia pseudotuberculosis serotype IB (strain PB1/+).